Reading from the N-terminus, the 176-residue chain is Nucleoside triphosphate/diphosphate phosphatase (176 aa).

Arg23 (proton donor) is an active-site residue. Mg(2+) contacts are provided by Asn87, Asp103, Asp105, Asp107, Asp120, and Glu123.

This sequence belongs to the Ntdp family. Mg(2+) is required as a cofactor.

It catalyses the reaction a ribonucleoside 5'-triphosphate + H2O = a ribonucleoside 5'-diphosphate + phosphate + H(+). It carries out the reaction a ribonucleoside 5'-diphosphate + H2O = a ribonucleoside 5'-phosphate + phosphate + H(+). Has nucleoside phosphatase activity towards nucleoside triphosphates and nucleoside diphosphates. The sequence is that of Nucleoside triphosphate/diphosphate phosphatase (ygaC) from Bacillus subtilis (strain 168).